The chain runs to 126 residues: Fluoride-specific ion channel FluC (126 aa).

4 helical membrane passes run 4 to 24 (PLLS…FLGL), 33 to 53 (IPLG…FAMA), 67 to 87 (FVIT…IEIV), and 97 to 117 (MAML…CLGL). Residues G74 and T77 each contribute to the Na(+) site.

The protein belongs to the fluoride channel Fluc/FEX (TC 1.A.43) family.

It is found in the cell inner membrane. The catalysed reaction is fluoride(in) = fluoride(out). Its activity is regulated as follows. Na(+) is not transported, but it plays an essential structural role and its presence is essential for fluoride channel function. Its function is as follows. Fluoride-specific ion channel. Important for reducing fluoride concentration in the cell, thus reducing its toxicity. In Acinetobacter baumannii (strain AB307-0294), this protein is Fluoride-specific ion channel FluC.